The following is a 250-amino-acid chain: MNREQSGKTLVLIPARMASTRLPGKPLADICGLPMIVQVARRAAEAEVGRIVVAVDHPDVFAAVTGAGFEAIMTRVDHQSGSDRIHEALLKADPHGEAEIVINVQGDLPTIEPGPIRAALKPLENPATDIATLTVAITDEHEKTNPNVVKVVGSPLSDSRFRALYFTRATAPYGEGPLYHHIGLYAYRRKALETFVSLKPSTLEKRESLEQLRALEAGMRIDVEVVDSVPLGVDTPADLDKARRILSARV.

The protein belongs to the KdsB family.

It is found in the cytoplasm. The enzyme catalyses 3-deoxy-alpha-D-manno-oct-2-ulosonate + CTP = CMP-3-deoxy-beta-D-manno-octulosonate + diphosphate. The protein operates within nucleotide-sugar biosynthesis; CMP-3-deoxy-D-manno-octulosonate biosynthesis; CMP-3-deoxy-D-manno-octulosonate from 3-deoxy-D-manno-octulosonate and CTP: step 1/1. It functions in the pathway bacterial outer membrane biogenesis; lipopolysaccharide biosynthesis. Functionally, activates KDO (a required 8-carbon sugar) for incorporation into bacterial lipopolysaccharide in Gram-negative bacteria. The sequence is that of 3-deoxy-manno-octulosonate cytidylyltransferase from Rhizobium meliloti (strain 1021) (Ensifer meliloti).